Consider the following 767-residue polypeptide: Probable beta-D-xylosidase 7 (767 aa).

An N-terminal signal peptide occupies residues 1 to 19 (MAKQLLLLLLLFIVHGVES). N-linked (GlcNAc...) asparagine glycosylation is present at asparagine 100. Aspartate 292 is a catalytic residue. The N-linked (GlcNAc...) asparagine glycan is linked to asparagine 643.

It belongs to the glycosyl hydrolase 3 family.

The protein localises to the secreted. It is found in the extracellular space. It localises to the extracellular matrix. This chain is Probable beta-D-xylosidase 7 (BXL7), found in Arabidopsis thaliana (Mouse-ear cress).